The following is a 252-amino-acid chain: Phosphatidylserine decarboxylase proenzyme (252 aa).

Catalysis depends on Ser211, which acts as the Schiff-base intermediate with substrate; via pyruvic acid. Ser211 carries the pyruvic acid (Ser); by autocatalysis modification.

The protein belongs to the phosphatidylserine decarboxylase family. PSD-A subfamily. Heterodimer of a large membrane-associated beta subunit and a small pyruvoyl-containing alpha subunit. Pyruvate serves as cofactor. In terms of processing, is synthesized initially as an inactive proenzyme. Formation of the active enzyme involves a self-maturation process in which the active site pyruvoyl group is generated from an internal serine residue via an autocatalytic post-translational modification. Two non-identical subunits are generated from the proenzyme in this reaction, and the pyruvate is formed at the N-terminus of the alpha chain, which is derived from the carboxyl end of the proenzyme. The post-translation cleavage follows an unusual pathway, termed non-hydrolytic serinolysis, in which the side chain hydroxyl group of the serine supplies its oxygen atom to form the C-terminus of the beta chain, while the remainder of the serine residue undergoes an oxidative deamination to produce ammonia and the pyruvoyl prosthetic group on the alpha chain.

The protein resides in the cell membrane. It carries out the reaction a 1,2-diacyl-sn-glycero-3-phospho-L-serine + H(+) = a 1,2-diacyl-sn-glycero-3-phosphoethanolamine + CO2. The protein operates within phospholipid metabolism; phosphatidylethanolamine biosynthesis; phosphatidylethanolamine from CDP-diacylglycerol: step 2/2. Catalyzes the formation of phosphatidylethanolamine (PtdEtn) from phosphatidylserine (PtdSer). The polypeptide is Phosphatidylserine decarboxylase proenzyme (Novosphingobium aromaticivorans (strain ATCC 700278 / DSM 12444 / CCUG 56034 / CIP 105152 / NBRC 16084 / F199)).